The chain runs to 472 residues: 2-oxoisovalerate dehydrogenase subunit alpha 1, mitochondrial (472 aa).

The N-terminal 56 residues, 1 to 56 (MAIWFARSKTLVSSLRHNLNLSTILIKRDYSHRPIFYTTSQLSSTAYLSPFGSLRH), are a transit peptide targeting the mitochondrion. 185-187 (QYR) contacts thiamine diphosphate. K(+) contacts are provided by serine 234, threonine 239, and glutamine 240.

This sequence belongs to the BCKDHA family. Heterotetramer of alpha and beta chains. Thiamine diphosphate is required as a cofactor.

The protein localises to the mitochondrion matrix. The enzyme catalyses N(6)-[(R)-lipoyl]-L-lysyl-[protein] + 3-methyl-2-oxobutanoate + H(+) = N(6)-[(R)-S(8)-2-methylpropanoyldihydrolipoyl]-L-lysyl-[protein] + CO2. The branched-chain alpha-keto dehydrogenase complex catalyzes the overall conversion of alpha-keto acids to acyl-CoA and CO(2). It contains multiple copies of three enzymatic components: branched-chain alpha-keto acid decarboxylase (E1), lipoamide acyltransferase (E2) and lipoamide dehydrogenase (E3). Required during sugar starvation. The protein is 2-oxoisovalerate dehydrogenase subunit alpha 1, mitochondrial of Arabidopsis thaliana (Mouse-ear cress).